The chain runs to 398 residues: 1-deoxy-D-xylulose 5-phosphate reductoisomerase (398 aa).

The NADPH site is built by T10, G11, S12, I13, G36, R37, N38, and N124. Residue K125 coordinates 1-deoxy-D-xylulose 5-phosphate. E126 is a binding site for NADPH. Residue D150 participates in Mn(2+) binding. Residues S151, E152, S186, and H209 each coordinate 1-deoxy-D-xylulose 5-phosphate. E152 contacts Mn(2+). G215 contributes to the NADPH binding site. The 1-deoxy-D-xylulose 5-phosphate site is built by S222, N227, K228, and E231. E231 is a binding site for Mn(2+).

Belongs to the DXR family. Homodimer. Mg(2+) serves as cofactor. Mn(2+) is required as a cofactor.

The enzyme catalyses 2-C-methyl-D-erythritol 4-phosphate + NADP(+) = 1-deoxy-D-xylulose 5-phosphate + NADPH + H(+). The protein operates within isoprenoid biosynthesis; isopentenyl diphosphate biosynthesis via DXP pathway; isopentenyl diphosphate from 1-deoxy-D-xylulose 5-phosphate: step 1/6. In terms of biological role, catalyzes the NADPH-dependent rearrangement and reduction of 1-deoxy-D-xylulose-5-phosphate (DXP) to 2-C-methyl-D-erythritol 4-phosphate (MEP). The chain is 1-deoxy-D-xylulose 5-phosphate reductoisomerase from Yersinia pseudotuberculosis serotype O:1b (strain IP 31758).